We begin with the raw amino-acid sequence, 327 residues long: GMP reductase (327 aa).

The active-site Thioimidate intermediate is the Cys176. 205-228 provides a ligand contact to NADP(+); sequence IIADGGIRTHGDIAKSIRFGASMV.

Belongs to the IMPDH/GMPR family. GuaC type 2 subfamily.

The catalysed reaction is IMP + NH4(+) + NADP(+) = GMP + NADPH + 2 H(+). Its function is as follows. Catalyzes the irreversible NADPH-dependent deamination of GMP to IMP. It functions in the conversion of nucleobase, nucleoside and nucleotide derivatives of G to A nucleotides, and in maintaining the intracellular balance of A and G nucleotides. In Streptococcus agalactiae serotype Ia (strain ATCC 27591 / A909 / CDC SS700), this protein is GMP reductase.